Consider the following 23-residue polypeptide: NDPCEEVCLQHTGNVKACEEACQ.

2 disulfides stabilise this stretch: C4–C22 and C8–C18.

It belongs to the short scorpion toxin superfamily. Potassium channel inhibitor kappa-KTx family. Kappa-KTx 2 subfamily. Expressed by the venom gland.

It is found in the secreted. Its function is as follows. Decreases the amplitude of the potassium current of the rat channels Kv1.1/KCNA1 by 33% and Kv1.2/KCNA2 by 8% as well as human Kv1.3/KCNA3 by 70%. In Opisthacanthus madagascariensis (Scorpion), this protein is Potassium channel toxin kappa-KTx 2.3.